A 191-amino-acid polypeptide reads, in one-letter code: Holliday junction branch migration complex subunit RuvA (191 aa).

The tract at residues 1-64 is domain I; the sequence is MIRGVRGTLV…EDELALYGFA (64 aa). A domain II region spans residues 65–136; it reads TEAELELFLS…ELRGRLPALT (72 aa). Positions 136–139 are flexible linker; that stretch reads TEVQ. The interval 140 to 191 is domain III; sequence AGEPIDQELVAALQALGYTAQEARQAATHPEVRRAPSLEERIVAALRQLAPP.

This sequence belongs to the RuvA family. As to quaternary structure, homotetramer. Forms an RuvA(8)-RuvB(12)-Holliday junction (HJ) complex. HJ DNA is sandwiched between 2 RuvA tetramers; dsDNA enters through RuvA and exits via RuvB. An RuvB hexamer assembles on each DNA strand where it exits the tetramer. Each RuvB hexamer is contacted by two RuvA subunits (via domain III) on 2 adjacent RuvB subunits; this complex drives branch migration. In the full resolvosome a probable DNA-RuvA(4)-RuvB(12)-RuvC(2) complex forms which resolves the HJ.

It is found in the cytoplasm. Functionally, the RuvA-RuvB-RuvC complex processes Holliday junction (HJ) DNA during genetic recombination and DNA repair, while the RuvA-RuvB complex plays an important role in the rescue of blocked DNA replication forks via replication fork reversal (RFR). RuvA specifically binds to HJ cruciform DNA, conferring on it an open structure. The RuvB hexamer acts as an ATP-dependent pump, pulling dsDNA into and through the RuvAB complex. HJ branch migration allows RuvC to scan DNA until it finds its consensus sequence, where it cleaves and resolves the cruciform DNA. In Thermomicrobium roseum (strain ATCC 27502 / DSM 5159 / P-2), this protein is Holliday junction branch migration complex subunit RuvA.